Consider the following 201-residue polypeptide: Holliday junction resolvase RecU (201 aa).

Residues Thr85, Asp87, Glu100, and Gln119 each coordinate Mg(2+).

Belongs to the RecU family. The cofactor is Mg(2+).

The protein localises to the cytoplasm. It catalyses the reaction Endonucleolytic cleavage at a junction such as a reciprocal single-stranded crossover between two homologous DNA duplexes (Holliday junction).. Endonuclease that resolves Holliday junction intermediates in genetic recombination. Cleaves mobile four-strand junctions by introducing symmetrical nicks in paired strands. Promotes annealing of linear ssDNA with homologous dsDNA. Required for DNA repair, homologous recombination and chromosome segregation. In Geobacillus thermodenitrificans (strain NG80-2), this protein is Holliday junction resolvase RecU.